The chain runs to 315 residues: PDZ domain-containing protein GIPC2 (315 aa).

Over residues 1 to 12 the composition is skewed to basic residues; it reads MPLKLRGKKKAK. The disordered stretch occupies residues 1–34; the sequence is MPLKLRGKKKAKSKETAGLVEGEPTGAGGGSLSA. The 81-residue stretch at 117–197 folds into the PDZ domain; sequence EVNVYKSEDS…EELFTMKLIE (81 aa).

The protein belongs to the GIPC family. Probably interacts with SEMA5A. Expressed at highest levels in ascending colon and at moderate levels in adult kidney. Expressed at low levels in adult pancreas and at very low levels in adult liver. Expression is down-regulated in several primary tumors, such as kidney, colon and rectal tumors.

The protein resides in the cytoplasm. The protein is PDZ domain-containing protein GIPC2 (GIPC2) of Homo sapiens (Human).